Consider the following 748-residue polypeptide: Antigen peptide transporter 1 (748 aa).

At 1–15 (MASSRCPAPRGCRCL) the chain is on the cytoplasmic side. The helical transmembrane segment at 16–36 (PGASLAWLGTVLLFLADWVLL) threads the bilayer. At 37-53 (RTALPRIFSLLVPTALP) the chain is on the lumenal side. Residues 54-76 (LLRVWAVGLSRWAVLWLGACGVL) traverse the membrane as a helical segment. The Cytoplasmic segment spans residues 77 to 92 (RATVGSKSENAGAQGW). Residues 93-113 (LAALEPLAAALGLALPGLALF) form a helical membrane-spanning segment. Residues 114-133 (RELISWGAPGSADSTRLLHW) lie on the Lumenal side of the membrane. The helical transmembrane segment at 134-154 (GSHPSAFVVSYAAALPAAALW) threads the bilayer. Topologically, residues 155–186 (HKLGSLWVPGGQGGSGNPVRRLLGCLGSETRR) are cytoplasmic. A helical transmembrane segment spans residues 187–207 (LSLFLVLVVLSSLGEMAIPFF). An ABC transmembrane type-1 domain is found at 187–470 (LSLFLVLVVL…LLSIYPRVQK (284 aa)). Residues 208–227 (TGRLTDWILQDGSADTFTRN) are Lumenal-facing. A helical transmembrane segment spans residues 228–248 (LTLMSILTIASAVLEFVGDGI). Over 249–298 (YNNTMGHVHSHLQGEVFGAVLRQETEFFQQNQTGNITSRVTEDTSTLSDS) the chain is Cytoplasmic. The chain crosses the membrane as a helical span at residues 299-319 (LSENLSLFLWYLVRGLCLLGI). The Lumenal segment spans residues 320–328 (MLWGSVSLT). The chain crosses the membrane as a helical span at residues 329–349 (MVTLVTLPLLFLLPKKVGKWY). Residues 350-418 (QLLEVQVRES…AVNSWTTSIS (69 aa)) lie on the Cytoplasmic side of the membrane. Positions 375–420 (PTVRSFANEEGEAQKFREKLQEIKTLNQKEAVAYAVNSWTTSISGM) are part of the peptide-binding site. Residues 419–439 (GMLLKVGILYIGGQLVTSGAV) form a helical membrane-spanning segment. Over 440-443 (SSGN) the chain is Lumenal. The chain crosses the membrane as a helical span at residues 444–464 (LVTFVLYQMQFTQAVEVLLSI). Residues 453–487 (QFTQAVEVLLSIYPRVQKAVGSSEKIFEYLDRTPR) are part of the peptide-binding site. The Cytoplasmic portion of the chain corresponds to 465–748 (YPRVQKAVGS…MVQAPADAPE (284 aa)). An ABC transporter domain is found at 503-742 (VQFQDVSFAY…KGCYWAMVQA (240 aa)). ATP contacts are provided by residues 538 to 546 (GPNGSGKST), 641 to 647 (SQLSGGQ), and glutamine 701. Mg(2+) is bound at residue serine 545.

The protein belongs to the ABC transporter superfamily. ABCB family. MHC peptide exporter (TC 3.A.1.209) subfamily. In terms of assembly, heterodimer of TAP1 and TAP2 (TAP1-TAP2). A component of the peptide loading complex (PLC), interacts via TAPBP with MHCI heterodimer; this interaction mediates peptide-MHCI assembly. Interacts with PSMB5 and PSMB8. Mg(2+) is required as a cofactor.

It localises to the endoplasmic reticulum membrane. The enzyme catalyses a peptide antigen(in) + ATP + H2O = a peptide antigen(out) + ADP + phosphate + H(+). ABC transporter associated with antigen processing. In complex with TAP2 mediates unidirectional translocation of peptide antigens from cytosol to endoplasmic reticulum (ER) for loading onto MHC class I (MHCI) molecules. Uses the chemical energy of ATP to export peptides against the concentration gradient. During the transport cycle alternates between 'inward-facing' state with peptide binding site facing the cytosol to 'outward-facing' state with peptide binding site facing the ER lumen. Peptide antigen binding to ATP-loaded TAP1-TAP2 induces a switch to hydrolysis-competent 'outward-facing' conformation ready for peptide loading onto nascent MHCI molecules. Subsequently ATP hydrolysis resets the transporter to the 'inward facing' state for a new cycle. As a component of the peptide loading complex (PLC), acts as a molecular scaffold essential for peptide-MHCI assembly and antigen presentation. The polypeptide is Antigen peptide transporter 1 (TAP1) (Gorilla gorilla gorilla (Western lowland gorilla)).